A 316-amino-acid chain; its full sequence is Endochitinase WIN8 (316 aa).

An N-terminal signal peptide occupies residues 1 to 23 (MRFWALTVLSLLLSLLLGVSSDT). The 41-residue stretch at 24–64 (AQCGSQAGNATCPNDLCCSSGGYCGLTVAYCCAGCVSQCRN) folds into the Chitin-binding type-1 domain. Cystine bridges form between cysteine 26–cysteine 41, cysteine 35–cysteine 47, cysteine 40–cysteine 54, cysteine 58–cysteine 62, cysteine 84–cysteine 146, cysteine 158–cysteine 168, and cysteine 266–cysteine 298. Glutamate 128 (proton donor) is an active-site residue.

This sequence belongs to the glycosyl hydrolase 19 family. Chitinase class I subfamily.

It carries out the reaction Random endo-hydrolysis of N-acetyl-beta-D-glucosaminide (1-&gt;4)-beta-linkages in chitin and chitodextrins.. Defense against chitin-containing fungal pathogens. The sequence is that of Endochitinase WIN8 (WIN8) from Populus trichocarpa (Western balsam poplar).